A 315-amino-acid polypeptide reads, in one-letter code: Ribosomal RNA small subunit methyltransferase H (315 aa).

S-adenosyl-L-methionine is bound by residues 37–39 (GGH), D57, F83, D105, and Q112. Positions 296–315 (EVKANPRSRSAVMRVAEKVR) are disordered.

This sequence belongs to the methyltransferase superfamily. RsmH family.

It localises to the cytoplasm. It carries out the reaction cytidine(1402) in 16S rRNA + S-adenosyl-L-methionine = N(4)-methylcytidine(1402) in 16S rRNA + S-adenosyl-L-homocysteine + H(+). Its function is as follows. Specifically methylates the N4 position of cytidine in position 1402 (C1402) of 16S rRNA. This chain is Ribosomal RNA small subunit methyltransferase H, found in Stutzerimonas stutzeri (strain A1501) (Pseudomonas stutzeri).